Here is a 282-residue protein sequence, read N- to C-terminus: Pantothenate synthetase (282 aa).

30–37 lines the ATP pocket; sequence MGNLHDGH. H37 acts as the Proton donor in catalysis. Residue Q61 coordinates (R)-pantoate. Q61 contributes to the beta-alanine binding site. Residue 149–152 coordinates ATP; sequence GNKD. Q155 is a (R)-pantoate binding site. ATP contacts are provided by residues A178 and 186 to 189; that span reads MSSR.

Belongs to the pantothenate synthetase family. As to quaternary structure, homodimer.

The protein resides in the cytoplasm. The catalysed reaction is (R)-pantoate + beta-alanine + ATP = (R)-pantothenate + AMP + diphosphate + H(+). The protein operates within cofactor biosynthesis; (R)-pantothenate biosynthesis; (R)-pantothenate from (R)-pantoate and beta-alanine: step 1/1. Functionally, catalyzes the condensation of pantoate with beta-alanine in an ATP-dependent reaction via a pantoyl-adenylate intermediate. This is Pantothenate synthetase from Marinomonas sp. (strain MWYL1).